The primary structure comprises 609 residues: UvrABC system protein C (609 aa).

The region spanning 15 to 93 (SSAGVYRMYD…IKQYMPKYNV (79 aa)) is the GIY-YIG domain. Residues 202-237 (QQVVTNLVTKMEQAAEEFHYEQAAAYRDQITALRKV) enclose the UVR domain.

Belongs to the UvrC family. As to quaternary structure, interacts with UvrB in an incision complex.

Its subcellular location is the cytoplasm. Functionally, the UvrABC repair system catalyzes the recognition and processing of DNA lesions. UvrC both incises the 5' and 3' sides of the lesion. The N-terminal half is responsible for the 3' incision and the C-terminal half is responsible for the 5' incision. This is UvrABC system protein C from Shewanella denitrificans (strain OS217 / ATCC BAA-1090 / DSM 15013).